Consider the following 344-residue polypeptide: Mycothiol acetyltransferase (344 aa).

Glutamate 36 is a binding site for 1D-myo-inositol 2-(L-cysteinylamino)-2-deoxy-alpha-D-glucopyranoside. N-acetyltransferase domains follow at residues 40-179 and 187-344; these read LALR…TPLP and VTVR…PSTG. The interval 61-83 is disordered; it reads ADTSGPNVPDTPGDQNAADTSTM. Residues 73–83 are compositionally biased toward polar residues; the sequence is GDQNAADTSTM. 109–111 lines the acetyl-CoA pocket; the sequence is VVV. 3 residues coordinate 1D-myo-inositol 2-(L-cysteinylamino)-2-deoxy-alpha-D-glucopyranoside: glutamate 214, lysine 253, and glutamate 272. Acetyl-CoA contacts are provided by residues 276–278 and 283–289; these read VGV and GGAGLGR. Tyrosine 310 is a binding site for 1D-myo-inositol 2-(L-cysteinylamino)-2-deoxy-alpha-D-glucopyranoside. Acetyl-CoA is bound at residue 315–320; it reads NVRAVR.

This sequence belongs to the acetyltransferase family. MshD subfamily. In terms of assembly, monomer.

It carries out the reaction 1D-myo-inositol 2-(L-cysteinylamino)-2-deoxy-alpha-D-glucopyranoside + acetyl-CoA = mycothiol + CoA + H(+). Catalyzes the transfer of acetyl from acetyl-CoA to desacetylmycothiol (Cys-GlcN-Ins) to form mycothiol. In Frankia casuarinae (strain DSM 45818 / CECT 9043 / HFP020203 / CcI3), this protein is Mycothiol acetyltransferase.